A 245-amino-acid polypeptide reads, in one-letter code: Triosephosphate isomerase (245 aa).

Substrate is bound at residue 4 to 6 (NWK). Catalysis depends on H91, which acts as the Electrophile. The active-site Proton acceptor is the E161. Residues G167, S207, and 228–229 (GG) contribute to the substrate site.

It belongs to the triosephosphate isomerase family. As to quaternary structure, homodimer.

The protein resides in the cytoplasm. It catalyses the reaction D-glyceraldehyde 3-phosphate = dihydroxyacetone phosphate. It functions in the pathway carbohydrate biosynthesis; gluconeogenesis. Its pathway is carbohydrate degradation; glycolysis; D-glyceraldehyde 3-phosphate from glycerone phosphate: step 1/1. Involved in the gluconeogenesis. Catalyzes stereospecifically the conversion of dihydroxyacetone phosphate (DHAP) to D-glyceraldehyde-3-phosphate (G3P). The protein is Triosephosphate isomerase of Chlorobaculum tepidum (strain ATCC 49652 / DSM 12025 / NBRC 103806 / TLS) (Chlorobium tepidum).